Here is a 267-residue protein sequence, read N- to C-terminus: 4-hydroxy-tetrahydrodipicolinate reductase (267 aa).

NAD(+) contacts are provided by residues 8–13 (GAAGRM), E34, 98–100 (GST), and 122–125 (APNM). Catalysis depends on H155, which acts as the Proton donor/acceptor. Position 156 (H156) interacts with (S)-2,3,4,5-tetrahydrodipicolinate. K159 (proton donor) is an active-site residue. 165–166 (GT) provides a ligand contact to (S)-2,3,4,5-tetrahydrodipicolinate.

It belongs to the DapB family.

The protein resides in the cytoplasm. It carries out the reaction (S)-2,3,4,5-tetrahydrodipicolinate + NAD(+) + H2O = (2S,4S)-4-hydroxy-2,3,4,5-tetrahydrodipicolinate + NADH + H(+). It catalyses the reaction (S)-2,3,4,5-tetrahydrodipicolinate + NADP(+) + H2O = (2S,4S)-4-hydroxy-2,3,4,5-tetrahydrodipicolinate + NADPH + H(+). It participates in amino-acid biosynthesis; L-lysine biosynthesis via DAP pathway; (S)-tetrahydrodipicolinate from L-aspartate: step 4/4. Catalyzes the conversion of 4-hydroxy-tetrahydrodipicolinate (HTPA) to tetrahydrodipicolinate. The polypeptide is 4-hydroxy-tetrahydrodipicolinate reductase (Syntrophotalea carbinolica (strain DSM 2380 / NBRC 103641 / GraBd1) (Pelobacter carbinolicus)).